Here is a 342-residue protein sequence, read N- to C-terminus: Oxygen-dependent coproporphyrinogen-III oxidase (342 aa).

Position 98 (serine 98) interacts with substrate. A divalent metal cation is bound by residues histidine 102 and histidine 112. The active-site Proton donor is histidine 112. Substrate is bound at residue asparagine 114–arginine 116. Residues histidine 146 and histidine 176 each coordinate a divalent metal cation. Residues tyrosine 266–glutamate 301 form an important for dimerization region.

The protein belongs to the aerobic coproporphyrinogen-III oxidase family. In terms of assembly, homodimer. A divalent metal cation is required as a cofactor.

The protein resides in the cytoplasm. The enzyme catalyses coproporphyrinogen III + O2 + 2 H(+) = protoporphyrinogen IX + 2 CO2 + 2 H2O. Its pathway is porphyrin-containing compound metabolism; protoporphyrin-IX biosynthesis; protoporphyrinogen-IX from coproporphyrinogen-III (O2 route): step 1/1. Its function is as follows. Involved in the heme and chlorophyll biosynthesis. Catalyzes the aerobic oxidative decarboxylation of propionate groups of rings A and B of coproporphyrinogen-III to yield the vinyl groups in protoporphyrinogen-IX. The polypeptide is Oxygen-dependent coproporphyrinogen-III oxidase (Prochlorococcus marinus subsp. pastoris (strain CCMP1986 / NIES-2087 / MED4)).